Here is a 110-residue protein sequence, read N- to C-terminus: UPF0122 protein Sca_0859 (110 aa).

It belongs to the UPF0122 family.

In terms of biological role, might take part in the signal recognition particle (SRP) pathway. This is inferred from the conservation of its genetic proximity to ftsY/ffh. May be a regulatory protein. The polypeptide is UPF0122 protein Sca_0859 (Staphylococcus carnosus (strain TM300)).